Reading from the N-terminus, the 122-residue chain is Large ribosomal subunit protein uL18 (122 aa).

This sequence belongs to the universal ribosomal protein uL18 family. Part of the 50S ribosomal subunit; part of the 5S rRNA/L5/L18/L25 subcomplex. Contacts the 5S and 23S rRNAs.

In terms of biological role, this is one of the proteins that bind and probably mediate the attachment of the 5S RNA into the large ribosomal subunit, where it forms part of the central protuberance. In Acetivibrio thermocellus (strain ATCC 27405 / DSM 1237 / JCM 9322 / NBRC 103400 / NCIMB 10682 / NRRL B-4536 / VPI 7372) (Clostridium thermocellum), this protein is Large ribosomal subunit protein uL18.